We begin with the raw amino-acid sequence, 401 residues long: MANPFSRWFLSERPPNCHVADLETSLDPHQTLLKVQKYKPALSDWVHYIFLGSIMLFVFITNPAPWIFKILFYCFLGTLFIIPATSQFFFNALPILTWVALYFTSSYFPDDRRPPITVKVLPAVETILYGDNLSDILATSTNSFLDILAWLPYGLFHFGAPFVVAAILFVFGPPTVLQGYAFAFGYMNLFGVIMQNVFPAAPPWYKILYGLQSANYDMHGSPGGLARIDKLLGINMYTTAFSNSSVIFGAFPSLHSGCATMEALFFCYCFPKLKPLFIAYVCWLWWSTMYLTHHYFVDLMAGSVLSYVIFQYTKYTHLPIVDTSLFCRWSYTSIEKYDISKSDPLAADSNDIESVPLSNLELDFDLNMTDEPSVSPSLFDGSTSVSRSSATSITSLGVKRA.

Over 1 to 41 (MANPFSRWFLSERPPNCHVADLETSLDPHQTLLKVQKYKPA) the chain is Cytoplasmic. Residues 42–62 (LSDWVHYIFLGSIMLFVFITN) form a helical membrane-spanning segment. At 63-64 (PA) the chain is on the lumenal side. The chain crosses the membrane as a helical span at residues 65-85 (PWIFKILFYCFLGTLFIIPAT). Over 86 to 87 (SQ) the chain is Cytoplasmic. Residues 88-108 (FFFNALPILTWVALYFTSSYF) form a helical membrane-spanning segment. Over 109–155 (PDDRRPPITVKVLPAVETILYGDNLSDILATSTNSFLDILAWLPYGL) the chain is Lumenal. N132 carries an N-linked (GlcNAc...) asparagine glycan. Residues 156–176 (FHFGAPFVVAAILFVFGPPTV) traverse the membrane as a helical segment. The Cytoplasmic portion of the chain corresponds to 177–178 (LQ). A helical transmembrane segment spans residues 179 to 199 (GYAFAFGYMNLFGVIMQNVFP). Residues 200 to 245 (AAPPWYKILYGLQSANYDMHGSPGGLARIDKLLGINMYTTAFSNSS) are Lumenal-facing. A helical membrane pass occupies residues 246 to 266 (VIFGAFPSLHSGCATMEALFF). Residues 267–268 (CY) are Cytoplasmic-facing. A helical transmembrane segment spans residues 269-289 (CFPKLKPLFIAYVCWLWWSTM). Residues 290-291 (YL) are Lumenal-facing. The helical transmembrane segment at 292 to 312 (THHYFVDLMAGSVLSYVIFQY) threads the bilayer. Over 313–401 (TKYTHLPIVD…SITSLGVKRA (89 aa)) the chain is Cytoplasmic. The disordered stretch occupies residues 374-401 (VSPSLFDGSTSVSRSSATSITSLGVKRA). The span at 382–395 (STSVSRSSATSITS) shows a compositional bias: low complexity. S392 and S395 each carry phosphoserine.

This sequence belongs to the AUR1 family. In terms of assembly, component of the inositol phosphorylceramide synthase complex composed of at least AUR1 and KEI1.

The protein localises to the golgi apparatus. Its subcellular location is the golgi stack membrane. It carries out the reaction an N-(2R-hydroxy-very-long-chain fatty acyl)-(R)-4-hydroxysphingoid base + a 1,2-diacyl-sn-glycero-3-phospho-(1D-myo-inositol) = a 1D-myo-inositol-1-phospho-N-[(R)-2-hydroxy-very-long-chain fatty acyl]-(R)-4-hydroxysphingoid base + a 1,2-diacyl-sn-glycerol. With respect to regulation, inhibited by aureobasidin A (AbA), khafrefungin and rustmicin. In terms of biological role, catalytic component of the inositol phosphorylceramide synthase which catalyzes the addition of a phosphorylinositol group onto ceramide to form inositol phosphorylceramide, an essential step in sphingolipid biosynthesis. In Saccharomyces cerevisiae (strain ATCC 204508 / S288c) (Baker's yeast), this protein is Inositol phosphorylceramide synthase catalytic subunit AUR1.